Reading from the N-terminus, the 196-residue chain is Ribosome maturation factor RimP (196 aa).

A disordered region spans residues 164 to 196; the sequence is LAPQKPNKPGPKKPGHEKKKPSNESAAGKPRAE. The segment covering 173–182 has biased composition (basic residues); it reads GPKKPGHEKK.

It belongs to the RimP family.

It is found in the cytoplasm. Functionally, required for maturation of 30S ribosomal subunits. The polypeptide is Ribosome maturation factor RimP (Xanthomonas euvesicatoria pv. vesicatoria (strain 85-10) (Xanthomonas campestris pv. vesicatoria)).